The following is a 296-amino-acid chain: Probable porphobilinogen deaminase (296 aa).

C241 is subject to S-(dipyrrolylmethanemethyl)cysteine.

Belongs to the HMBS family. Requires dipyrromethane as cofactor.

The catalysed reaction is 4 porphobilinogen + H2O = hydroxymethylbilane + 4 NH4(+). It functions in the pathway porphyrin-containing compound metabolism; protoporphyrin-IX biosynthesis; coproporphyrinogen-III from 5-aminolevulinate: step 2/4. Its function is as follows. Tetrapolymerization of the monopyrrole PBG into the hydroxymethylbilane pre-uroporphyrinogen in several discrete steps. In Pyrobaculum neutrophilum (strain DSM 2338 / JCM 9278 / NBRC 100436 / V24Sta) (Thermoproteus neutrophilus), this protein is Probable porphobilinogen deaminase.